The primary structure comprises 394 residues: 8-amino-7-oxononanoate synthase (394 aa).

Arginine 21 provides a ligand contact to substrate. Residue 112 to 113 participates in pyridoxal 5'-phosphate binding; that stretch reads GY. Histidine 137 provides a ligand contact to substrate. Residues serine 183, histidine 211, and threonine 239 each coordinate pyridoxal 5'-phosphate. Position 242 is an N6-(pyridoxal phosphate)lysine (lysine 242). Threonine 358 lines the substrate pocket.

The protein belongs to the class-II pyridoxal-phosphate-dependent aminotransferase family. BioF subfamily. Homodimer. Pyridoxal 5'-phosphate serves as cofactor.

It catalyses the reaction 6-carboxyhexanoyl-[ACP] + L-alanine + H(+) = (8S)-8-amino-7-oxononanoate + holo-[ACP] + CO2. It functions in the pathway cofactor biosynthesis; biotin biosynthesis. Catalyzes the decarboxylative condensation of pimeloyl-[acyl-carrier protein] and L-alanine to produce 8-amino-7-oxononanoate (AON), [acyl-carrier protein], and carbon dioxide. The sequence is that of 8-amino-7-oxononanoate synthase from Paraburkholderia xenovorans (strain LB400).